Here is a 1387-residue protein sequence, read N- to C-terminus: DNA-directed RNA polymerase subunit beta'' (1387 aa).

Zn(2+) contacts are provided by cysteine 224, cysteine 295, cysteine 302, and cysteine 305. Residues 883 to 903 (SHTGKRNDPAGSGLIPDNGSD) are disordered.

It belongs to the RNA polymerase beta' chain family. RpoC2 subfamily. As to quaternary structure, in plastids the minimal PEP RNA polymerase catalytic core is composed of four subunits: alpha, beta, beta', and beta''. When a (nuclear-encoded) sigma factor is associated with the core the holoenzyme is formed, which can initiate transcription. Requires Zn(2+) as cofactor.

It localises to the plastid. The protein resides in the chloroplast. It catalyses the reaction RNA(n) + a ribonucleoside 5'-triphosphate = RNA(n+1) + diphosphate. In terms of biological role, DNA-dependent RNA polymerase catalyzes the transcription of DNA into RNA using the four ribonucleoside triphosphates as substrates. In Platanus occidentalis (Sycamore), this protein is DNA-directed RNA polymerase subunit beta''.